The primary structure comprises 1408 residues: MSETSSHDSFYDSLSDVQEEGKSADFFPGLSAFLSQEEINKSLDLARRAIDSSETEDFDSEKEISQIFSKSPISLCETPSHEEPKSGKQTSSERPQDSRRAPVQPLTGDQAERITSPGSKRKPGVSPLLASPSYIRSLRKAEKRGAKNPNPSSKPKTAQQSKAGPQSQLCDKAASFIEELTSIFREAAKPRNRSPNGESSSPDSGYLSPKNQPSALMSASASQSPTADQLDQLEMDAEVKQAQGSLCYQAHQASEETLPLAHIPHPQPQKARHLPTAPRFIQKLRSQEVAEGSRVYLECRVTGNPTPRVRWFCEGKELYNSPDVQIHCESGELHTLVIAEAFEDDTGRYTCLATNPSGSDSTSAEVFIEGASSTDSDSESLSFISKAGAMPQAQKKTTSVSLTIGSSAPKTGVTTAVIQPLSVPVQQAHSATSYLCRPDGTTMGCLLPVFTKELQNTAASEGQVVVLECRVRGAPPLQVQWFRQGSEIQDSPDFRILQKKPRSTAEPEEICTLVIAESFPEDAGIFTCSATNDYGSVTSTAQLVITSANNENCSYDSTGEPNSDHFQHFPPPPPILETGSYELASQKPSEIQQVNSPNLGFSMAALQMQFNTAERETNGVHPSHGVNGLINGKAYGNKSPPTPTALLSPTKEPPPLLAKPKLDPLKLQQLQNQVRLEQEACAWPPAPPGVPCNSSSSGSSAPPSPPFPPPPPAFPELAACASPVPSEPMSALASRATAMQSSGSFNYARPKQFIAAQNLGPASGLPTPTSSPSSSSLPSPLSPTPRPFGRAPGPPFVEPEAMWGPSSPSPPPPPPPVFSPSAAYPVPDVFPLPPPPPPLPSSTSHCASPARFGPSQTPAAFLSALLPSQPPPVAVNALGLPKGVTPAGFPKKSSRTARIASDEEIQGTKDAVIQDLERKLRFKEDLLNNGQPRLTYEERMARRLLGADSANVFNIQEPEETAANQDAGAPRASVGGPLDGQKEYKVSSCEQRLISEIEYRLERSPVDESGDEVQDPDVPVENATAPFFEMKLKHYKIFEGMPVTFTCRVAGNPKPKIYWFKDGKQISPKSDHYTIQRDLDGTCSLHTTASTLDDDGNYTIMAANPQGRVSCTGRLMVQAVNQRGRSPRSPSGHPHARRPRSRSRDSGDENEPIQERFFRPHFLQAPGDLTVQEGKLCRMDCKVSGLPTPDLSWQLDGKPIRPDSAHKMLVRENGVHSLIIEPVTSRDAGIYTCIATNRAGQNSFNLELVVAAKEAHKAPVFMEKLQNTGVADGYPVRLECRVSGVPPPQIFWKKENESLTHSTERVSMHQDNHGYICLLIQGATKEDAGWYTVSAKNEAGIVSCTARLDVYTQWHQQPQTTKPKKVRPSASRYAALSDQGLDIKAAFQPEASPSHLTLNSGLVESEDL.

Positions 69 to 229 are disordered; that stretch reads SKSPISLCET…SASQSPTADQ (161 aa). Polar residues-rich tracts occupy residues 149 to 169 and 193 to 229; these read PNPS…QSQL and RSPN…TADQ. A Phosphoserine modification is found at serine 194. Ig-like C2-type domains are found at residues 278–367 and 448–546; these read PRFI…AEVF and PVFT…LVIT. Intrachain disulfides connect cysteine 299–cysteine 351 and cysteine 469–cysteine 528. The segment at 569–573 is interaction with VASP; the sequence is FPPPP. Disordered regions lie at residues 631–660 and 687–727; these read NGKA…LAKP and PPGV…VPSE. Phosphoserine is present on serine 639. Threonine 642 carries the phosphothreonine modification. A Phosphoserine modification is found at serine 648. The segment at 653–683 is interaction with LASP1; it reads PPPLLAKPKLDPLKLQQLQNQVRLEQEACAW. Positions 683-713 are interaction with SORBS2, SPIN90 and SRC; the sequence is WPPAPPGVPCNSSSSGSSAPPSPPFPPPPPA. Over residues 691-701 the composition is skewed to low complexity; sequence PCNSSSSGSSA. Phosphoserine occurs at positions 700, 704, and 744. Positions 702–714 are enriched in pro residues; sequence PPSPPFPPPPPAF. 3 disordered regions span residues 758–854, 882–904, and 960–981; these read NLGP…RFGP, KGVT…SDEE, and ETAA…LDGQ. The span at 765 to 779 shows a compositional bias: low complexity; it reads LPTPTSSPSSSSLPS. Composition is skewed to pro residues over residues 780 to 797, 807 to 818, and 828 to 840; these read PLSP…PPFV, SPSPPPPPPPVF, and DVFP…PPLP. Residues 782-842 are interaction with EPS8; sequence SPTPRPFGRA…PPPPPPLPSS (61 aa). The interaction with SORBS2, SPIN90, SRC and PFN1 stretch occupies residues 807 to 842; sequence SPSPPPPPPPVFSPSAAYPVPDVFPLPPPPPPLPSS. The interaction with VASP stretch occupies residues 830–834; sequence FPLPP. Serine 901 carries the post-translational modification Phosphoserine. A phosphoserine mark is found at serine 1004 and serine 1009. Positions 1026–1110 constitute an Ig-like C2-type 3 domain; it reads PFFEMKLKHY…MAANPQGRVS (85 aa). The interval 1121–1150 is disordered; that stretch reads NQRGRSPRSPSGHPHARRPRSRSRDSGDEN. Over residues 1123–1133 the composition is skewed to low complexity; that stretch reads RGRSPRSPSGH. Phosphoserine occurs at positions 1126, 1129, 1131, and 1141. Serine 1143 is subject to Phosphoserine; by PKB/AKT1. At serine 1146 the chain carries Phosphoserine. Ig-like C2-type domains follow at residues 1160 to 1251 and 1259 to 1349; these read PHFL…LVVA and PVFM…ARLD. Interaction with EZR stretches follow at residues 1162–1251 and 1261–1351; these read FLQA…LVVA and FMEK…LDVY. An intrachain disulfide couples cysteine 1181 to cysteine 1233. At serine 1377 the chain carries Phosphoserine.

This sequence belongs to the myotilin/palladin family. Interacts with EPS8. Interacts with LASP1. Interacts with VASP. Interacts with ACTN. Interacts with SORBS2. Interacts with PFN1. Interacts with LPP. Interacts with SPIN90. Interacts with SRC. Interacts with EZR. Interacts with RAI14. In terms of processing, phosphorylated predominantly on serines and, to a lesser extent, on tyrosines. Phosphorylation at Ser-1143 by PKB/AKT1 modulates cytoskeletal organization and cell motility. Detected in both muscle and non-muscle tissues and cells (at protein level). Isoform 3 is widely expressed, isoform 4 is particularly abundant in tissues rich in smooth muscle and in the cardiac muscle and isoform 1 is detected in heart.

It is found in the cytoplasm. Its subcellular location is the cytoskeleton. It localises to the cell junction. The protein localises to the focal adhesion. The protein resides in the myofibril. It is found in the sarcomere. Its subcellular location is the z line. It localises to the cell projection. The protein localises to the ruffle. The protein resides in the podosome. It is found in the lamellipodium. Its subcellular location is the axon. It localises to the growth cone. In terms of biological role, cytoskeletal protein required for organization of normal actin cytoskeleton. Roles in establishing cell morphology, motility, cell adhesion and cell-extracellular matrix interactions in a variety of cell types. May function as a scaffolding molecule with the potential to influence both actin polymerization and the assembly of existing actin filaments into higher-order arrays. Binds to proteins that bind to either monomeric or filamentous actin. Localizes at sites where active actin remodeling takes place, such as lamellipodia and membrane ruffles. Different isoforms may have functional differences. Involved in the control of morphological and cytoskeletal changes associated with dendritic cell maturation. Involved in targeting ACTN to specific subcellular locations. May be required for the initiation of neural tube closure. In Mus musculus (Mouse), this protein is Palladin (Palld).